Consider the following 376-residue polypeptide: 23S rRNA (uracil(747)-C(5))-methyltransferase RlmC (376 aa).

[4Fe-4S] cluster-binding residues include Cys-3, Cys-11, Cys-14, and Cys-87. The S-adenosyl-L-methionine site is built by Gln-212, Phe-241, Glu-262, and Asn-307. Cys-334 acts as the Nucleophile in catalysis.

This sequence belongs to the class I-like SAM-binding methyltransferase superfamily. RNA M5U methyltransferase family. RlmC subfamily.

The enzyme catalyses uridine(747) in 23S rRNA + S-adenosyl-L-methionine = 5-methyluridine(747) in 23S rRNA + S-adenosyl-L-homocysteine + H(+). Its function is as follows. Catalyzes the formation of 5-methyl-uridine at position 747 (m5U747) in 23S rRNA. This chain is 23S rRNA (uracil(747)-C(5))-methyltransferase RlmC, found in Yersinia pseudotuberculosis serotype O:1b (strain IP 31758).